Reading from the N-terminus, the 484-residue chain is Adenylyltransferase and sulfurtransferase uba4 (484 aa).

Residues alanine 39–alanine 49 show a composition bias toward low complexity. A disordered region spans residues alanine 39 to arginine 58. ATP contacts are provided by residues glycine 98, aspartate 119, serine 126 to arginine 130, lysine 143, and aspartate 187 to asparagine 188. Zn(2+)-binding residues include cysteine 236 and cysteine 239. Cysteine 253 acts as the Glycyl thioester intermediate; for adenylyltransferase activity in catalysis. The Zn(2+) site is built by cysteine 313 and cysteine 316. One can recognise a Rhodanese domain in the interval proline 370–proline 482. The active-site Cysteine persulfide intermediate; for sulfurtransferase activity is cysteine 437.

This sequence in the N-terminal section; belongs to the HesA/MoeB/ThiF family. UBA4 subfamily. Requires Zn(2+) as cofactor.

It localises to the cytoplasm. The protein resides in the cytosol. The catalysed reaction is [molybdopterin-synthase sulfur-carrier protein]-C-terminal Gly-Gly + ATP + H(+) = [molybdopterin-synthase sulfur-carrier protein]-C-terminal Gly-Gly-AMP + diphosphate. It catalyses the reaction [molybdopterin-synthase sulfur-carrier protein]-C-terminal Gly-Gly-AMP + S-sulfanyl-L-cysteinyl-[cysteine desulfurase] + AH2 = [molybdopterin-synthase sulfur-carrier protein]-C-terminal-Gly-aminoethanethioate + L-cysteinyl-[cysteine desulfurase] + A + AMP + 2 H(+). It participates in tRNA modification; 5-methoxycarbonylmethyl-2-thiouridine-tRNA biosynthesis. The protein operates within cofactor biosynthesis; molybdopterin biosynthesis. In terms of biological role, plays a central role in 2-thiolation of mcm(5)S(2)U at tRNA wobble positions of cytosolic tRNA(Lys), tRNA(Glu) and tRNA(Gln). Also essential during biosynthesis of the molybdenum cofactor. Acts by mediating the C-terminal thiocarboxylation of sulfur carriers urm1 and mocs2a. Its N-terminus first activates urm1 and mocs2a as acyl-adenylates (-COAMP), then the persulfide sulfur on the catalytic cysteine is transferred to urm1 and mocs2a to form thiocarboxylation (-COSH) of their C-terminus. The reaction probably involves hydrogen sulfide that is generated from the persulfide intermediate and that acts as a nucleophile towards urm1 and mocs2a. Subsequently, a transient disulfide bond is formed. Does not use thiosulfate as sulfur donor; nfs1 probably acting as a sulfur donor for thiocarboxylation reactions. This chain is Adenylyltransferase and sulfurtransferase uba4, found in Aspergillus terreus (strain NIH 2624 / FGSC A1156).